The following is a 227-amino-acid chain: Cytidylate kinase (227 aa).

12–20 (GPSGAGKGT) serves as a coordination point for ATP.

It belongs to the cytidylate kinase family. Type 1 subfamily.

The protein resides in the cytoplasm. The catalysed reaction is CMP + ATP = CDP + ADP. It catalyses the reaction dCMP + ATP = dCDP + ADP. The polypeptide is Cytidylate kinase (Shigella sonnei (strain Ss046)).